A 977-amino-acid polypeptide reads, in one-letter code: Poly [ADP-ribose] polymerase 1 (977 aa).

2 consecutive PARP-type zinc fingers follow at residues 8 to 91 and 104 to 179; these read WKAE…GSAP and CTIE…KKDA. Residues Cys-20, Cys-23, His-52, Cys-55, Cys-116, Cys-119, His-141, and Cys-144 each contribute to the Zn(2+) site. Disordered stretches follow at residues 177–199 and 218–237; these read KDAP…QNDI and DKGK…DLQE. In terms of domain architecture, PADR1 zinc-binding spans 227–365; sequence DSNANSSDLQ…AKKPERVLPP (139 aa). The SAP domain occupies 254–288; the sequence is KKHVSTAELRNMLEANGQDTSGPERHLLDRCADGM. The segment at 291–335 is zinc ribbon; that stretch reads GALGTCPVCSSFLYYHGGQYHCSGYVSEWSKCTYSTTEPVRSKKK. Cys-296, Cys-299, Cys-312, and Cys-322 together coordinate Zn(2+). Residues 381–473 enclose the BRCT domain; the sequence is SFLSEGLDKL…RVLPFDLYKV (93 aa). Residues 504–604 form the WGR domain; it reads TGHILEDGKS…TNFQKQPGKF (101 aa). Residues 626-745 enclose the PARP alpha-helical domain; sequence KSSLPPQLLE…DIEIASKLVG (120 aa). The PARP catalytic domain maps to 752–977; that stretch reads ESLDDKYKKL…LLKVRFHHKR (226 aa).

Belongs to the ARTD/PARP family.

The protein localises to the nucleus. It carries out the reaction NAD(+) + (ADP-D-ribosyl)n-acceptor = nicotinamide + (ADP-D-ribosyl)n+1-acceptor + H(+).. It catalyses the reaction L-aspartyl-[protein] + NAD(+) = 4-O-(ADP-D-ribosyl)-L-aspartyl-[protein] + nicotinamide. The catalysed reaction is L-glutamyl-[protein] + NAD(+) = 5-O-(ADP-D-ribosyl)-L-glutamyl-[protein] + nicotinamide. Functionally, involved in the base excision repair (BER) pathway, by catalyzing the poly(ADP-ribosyl)ation of a limited number of acceptor proteins involved in chromatin architecture and in DNA metabolism. This modification follows DNA damages and appears as an obligatory step in a detection/signaling pathway leading to the reparation of DNA strand breaks. The sequence is that of Poly [ADP-ribose] polymerase 1 (PARP1) from Oryza sativa subsp. japonica (Rice).